The chain runs to 604 residues: ATPase family AAA domain-containing protein 3A homolog (604 aa).

Residues Met1 to Ala50 are disordered. The span at Asn8 to Gly19 shows a compositional bias: polar residues. The segment covering Pro29 to Ala50 has biased composition (basic and acidic residues). Positions Glu62 to Ala221 form a coiled coil. Residue Gly358–Thr365 coordinates ATP.

Can form homooligomers.

It localises to the mitochondrion inner membrane. The protein localises to the mitochondrion matrix. It is found in the mitochondrion nucleoid. Required to maintain the proper number of mitochondria in neurons and muscles. This chain is ATPase family AAA domain-containing protein 3A homolog, found in Drosophila melanogaster (Fruit fly).